Reading from the N-terminus, the 685-residue chain is Bifunctional diguanylate cyclase/cyclic di-GMP phosphodiesterase MucR (685 aa).

The MHYT domain maps to 6–199; the sequence is YNQVLVAFSL…YTGMAAAQFP (194 aa). The next 7 helical transmembrane spans lie at 9–29, 44–64, 77–97, 117–137, 141–161, 175–195, and 214–234; these read VLVA…LDMA, LIGG…VGML, GLTL…LWLV, GIAA…GIVY, WLGL…WIAF, AGAA…GMAA, and GWLA…ALIV. Topologically, residues 235 to 685 are cytoplasmic; sequence SVLDSRLEAR…PAEQLLASVA (451 aa). Positions 293–425 constitute a GGDEF domain; that stretch reads RRFAVLFMDL…GRNGYCFFES (133 aa). One can recognise an EAL domain in the interval 434–685; sequence QLQLLHDLRQ…PAEQLLASVA (252 aa). Q455, E469, L472, R473, N528, and Q533 together coordinate 3',3'-c-di-GMP. Position 469 (E469) interacts with Mg(2+). N528 is a Mg(2+) binding site. Mg(2+) is bound by residues E560, D590, and D591. D590 serves as a coordination point for 3',3'-c-di-GMP. Residue R614 participates in 3',3'-c-di-GMP binding. Mg(2+) is bound at residue E647. Residues E650 and F669 each contribute to the 3',3'-c-di-GMP site.

As to quaternary structure, homodimer. It depends on Mg(2+) as a cofactor.

The protein resides in the cell inner membrane. It carries out the reaction 2 GTP = 3',3'-c-di-GMP + 2 diphosphate. The catalysed reaction is 3',3'-c-di-GMP + H2O = 5'-phosphoguanylyl(3'-&gt;5')guanosine + H(+). Displays both diguanylate cyclase (DGC) and c-di-GMP-specific phosphodiesterase (PDE) activity. Probably modulates DGC and PDE activities, and thus c-di-GMP levels, in a growth mode-dependent manner. May act as a PDE under planktonic growth conditions and as a DGC in biofilms. During biofilm formation, it specifically activates alginate biosynthesis via generation of a localized c-di-GMP pool in the vicinity of the alginate biosynthesis protein Alg44. This is Bifunctional diguanylate cyclase/cyclic di-GMP phosphodiesterase MucR from Pseudomonas aeruginosa (strain ATCC 15692 / DSM 22644 / CIP 104116 / JCM 14847 / LMG 12228 / 1C / PRS 101 / PAO1).